Here is a 179-residue protein sequence, read N- to C-terminus: Dual-action ribosomal maturation protein DarP (179 aa).

Belongs to the DarP family.

It is found in the cytoplasm. Functionally, member of a network of 50S ribosomal subunit biogenesis factors which assembles along the 30S-50S interface, preventing incorrect 23S rRNA structures from forming. Promotes peptidyl transferase center (PTC) maturation. This is Dual-action ribosomal maturation protein DarP from Aliivibrio fischeri (strain ATCC 700601 / ES114) (Vibrio fischeri).